A 247-amino-acid polypeptide reads, in one-letter code: Cell division protein ZapD (247 aa).

It belongs to the ZapD family. Interacts with FtsZ.

The protein localises to the cytoplasm. In terms of biological role, cell division factor that enhances FtsZ-ring assembly. Directly interacts with FtsZ and promotes bundling of FtsZ protofilaments, with a reduction in FtsZ GTPase activity. In Klebsiella pneumoniae subsp. pneumoniae (strain ATCC 700721 / MGH 78578), this protein is Cell division protein ZapD.